Reading from the N-terminus, the 252-residue chain is Adenosylcobinamide-GDP ribazoletransferase (252 aa).

6 consecutive transmembrane segments (helical) span residues leucine 29 to valine 49, glycine 50 to leucine 70, valine 104 to valine 124, phenylalanine 129 to leucine 149, phenylalanine 166 to leucine 186, and phenylalanine 194 to valine 214.

It belongs to the CobS family. The cofactor is Mg(2+).

It is found in the cell inner membrane. The enzyme catalyses alpha-ribazole + adenosylcob(III)inamide-GDP = adenosylcob(III)alamin + GMP + H(+). It catalyses the reaction alpha-ribazole 5'-phosphate + adenosylcob(III)inamide-GDP = adenosylcob(III)alamin 5'-phosphate + GMP + H(+). It participates in cofactor biosynthesis; adenosylcobalamin biosynthesis; adenosylcobalamin from cob(II)yrinate a,c-diamide: step 7/7. Joins adenosylcobinamide-GDP and alpha-ribazole to generate adenosylcobalamin (Ado-cobalamin). Also synthesizes adenosylcobalamin 5'-phosphate from adenosylcobinamide-GDP and alpha-ribazole 5'-phosphate. The chain is Adenosylcobinamide-GDP ribazoletransferase from Chlorobium chlorochromatii (strain CaD3).